A 105-amino-acid polypeptide reads, in one-letter code: Large ribosomal subunit protein eL42 (105 aa).

The interval 28 to 57 (YKKGKDSLAAQGKRRYDRKQSGYGGQTKPV) is disordered.

It belongs to the eukaryotic ribosomal protein eL42 family.

The chain is Large ribosomal subunit protein eL42 (RPL44) from Gossypium hirsutum (Upland cotton).